A 138-amino-acid chain; its full sequence is Large ribosomal subunit protein uL16 (138 aa).

Basic residues predominate over residues 1-19; sequence MLIPRKVKHRKQHHPKKKG. Residues 1-24 form a disordered region; the sequence is MLIPRKVKHRKQHHPKKKGTASGG.

It belongs to the universal ribosomal protein uL16 family. Part of the 50S ribosomal subunit.

Functionally, binds 23S rRNA and is also seen to make contacts with the A and possibly P site tRNAs. The sequence is that of Large ribosomal subunit protein uL16 from Mycobacteroides abscessus (strain ATCC 19977 / DSM 44196 / CCUG 20993 / CIP 104536 / JCM 13569 / NCTC 13031 / TMC 1543 / L948) (Mycobacterium abscessus).